We begin with the raw amino-acid sequence, 690 residues long: Glycine--tRNA ligase beta subunit (690 aa).

Belongs to the class-II aminoacyl-tRNA synthetase family. As to quaternary structure, tetramer of two alpha and two beta subunits.

It localises to the cytoplasm. It carries out the reaction tRNA(Gly) + glycine + ATP = glycyl-tRNA(Gly) + AMP + diphosphate. In Syntrophus aciditrophicus (strain SB), this protein is Glycine--tRNA ligase beta subunit.